A 145-amino-acid polypeptide reads, in one-letter code: Pseudoazurin (145 aa).

The first 22 residues, 1 to 22 (MFHHSLAAAAAALLALAAPGFA), serve as a signal peptide directing secretion. The Plastocyanin-like domain maps to 27–115 (VHMLNKGESG…MGMVGLVQVG (89 aa)). Residues histidine 62, cysteine 100, histidine 103, and methionine 108 each contribute to the Cu cation site. Residues 126 to 145 (TAKMPKKARERMDAELAQVN) are disordered.

As to quaternary structure, homodimer. Cu cation serves as cofactor.

It localises to the periplasm. In terms of biological role, this soluble electron transfer copper protein is required for the inactivation of copper-containing nitrite reductase in the presence of oxygen. The polypeptide is Pseudoazurin (pazS) (Paracoccus pantotrophus (Thiosphaera pantotropha)).